Here is a 497-residue protein sequence, read N- to C-terminus: Vacuolar-processing enzyme beta-isozyme 1 (497 aa).

The first 23 residues, 1–23 (MAARCWVWGFVVALLAVAAAADG), serve as a signal peptide directing secretion. The N-linked (GlcNAc...) asparagine glycan is linked to Asn-153. His-180 is an active-site residue. The active-site Nucleophile is the Cys-222. A disulfide bridge links Cys-255 with Cys-269. A glycan (N-linked (GlcNAc...) asparagine) is linked at Asn-340. Cystine bridges form between Cys-432–Cys-462 and Cys-444–Cys-479.

The protein belongs to the peptidase C13 family. Post-translationally, auto-catalytic activation. In terms of tissue distribution, expressed in developing seeds.

Its subcellular location is the protein storage vacuole. It carries out the reaction Hydrolysis of proteins and small molecule substrates at -Asn-|-Xaa- bonds.. Its function is as follows. Asparagine-specific endopeptidase that may be involved in processing of proteins targeted to vacuoles. Cysteine protease required for post-translational proteolysis of seed storage proteins in the protein storage vacuole (PSV) of developing seeds, by processing of proglutelin precursor to mature glutelin subunits, thus contributing to the formation of protein crystalline structures in PSV. The polypeptide is Vacuolar-processing enzyme beta-isozyme 1 (Oryza sativa subsp. japonica (Rice)).